The following is a 446-amino-acid chain: MAKDLFGTDGIRGVAGQYPLDRDTVYAFGVALGKDAALHAAKPEILIGADTRESGTWIAELVAGGLASQGAQVRYAGVITTPGVAYLTRTGSFVAGVMISASHNPYDDNGLKVFGHSGFKLPDDEELLIEQEIFRLREAPVAPQPLSLTVEEPLVRQYLKYLSGISSVRLDGVRVAIDCGNGASYRLAPELFQGLGADVVTICCEPNGRNINLNCGALHLEALQQAVVAHRAHFGVAFDGDADRAIFVSSSGQVVNGDAVLLACGRALKAAGKLAGNTVVSTVMSNLGLERAFDAAGIRMVRTPVGDKYVLEEMVRLGAALGGEQSGHVIFREYSTTGDGMLTALRLFEIAQQAGTGLDELTADLKIYPQRLVNVRVREKKGLLELPAVAKEIRRVEDAFGGAGRVLVRFSGTEPLARVMVEGPNLEQVESFSTSIADVIRREMGE.

Ser-102 acts as the Phosphoserine intermediate in catalysis. Residues Ser-102, Asp-239, Asp-241, and Asp-243 each contribute to the Mg(2+) site. Ser-102 is modified (phosphoserine).

Belongs to the phosphohexose mutase family. Requires Mg(2+) as cofactor. Post-translationally, activated by phosphorylation.

It carries out the reaction alpha-D-glucosamine 1-phosphate = D-glucosamine 6-phosphate. In terms of biological role, catalyzes the conversion of glucosamine-6-phosphate to glucosamine-1-phosphate. This Solibacter usitatus (strain Ellin6076) protein is Phosphoglucosamine mutase.